Reading from the N-terminus, the 315-residue chain is Methionyl-tRNA formyltransferase (315 aa).

S113–P116 provides a ligand contact to (6S)-5,6,7,8-tetrahydrofolate.

It belongs to the Fmt family.

The enzyme catalyses L-methionyl-tRNA(fMet) + (6R)-10-formyltetrahydrofolate = N-formyl-L-methionyl-tRNA(fMet) + (6S)-5,6,7,8-tetrahydrofolate + H(+). Its function is as follows. Attaches a formyl group to the free amino group of methionyl-tRNA(fMet). The formyl group appears to play a dual role in the initiator identity of N-formylmethionyl-tRNA by promoting its recognition by IF2 and preventing the misappropriation of this tRNA by the elongation apparatus. The polypeptide is Methionyl-tRNA formyltransferase (Klebsiella pneumoniae subsp. pneumoniae (strain ATCC 700721 / MGH 78578)).